The sequence spans 136 residues: Large ribosomal subunit protein bL17 (136 aa).

This sequence belongs to the bacterial ribosomal protein bL17 family. Part of the 50S ribosomal subunit. Contacts protein L32.

This chain is Large ribosomal subunit protein bL17, found in Rhodopseudomonas palustris (strain BisB5).